Reading from the N-terminus, the 422-residue chain is 5-methylthioadenosine/S-adenosylhomocysteine deaminase 1 (422 aa).

Zn(2+) is bound by residues His-56 and His-58. 2 residues coordinate substrate: Glu-85 and His-174. A Zn(2+)-binding site is contributed by His-201. Residues Glu-204 and Asp-290 each coordinate substrate. Position 290 (Asp-290) interacts with Zn(2+).

The protein belongs to the metallo-dependent hydrolases superfamily. MTA/SAH deaminase family. It depends on Zn(2+) as a cofactor.

The enzyme catalyses S-adenosyl-L-homocysteine + H2O + H(+) = S-inosyl-L-homocysteine + NH4(+). The catalysed reaction is S-methyl-5'-thioadenosine + H2O + H(+) = S-methyl-5'-thioinosine + NH4(+). In terms of biological role, catalyzes the deamination of 5-methylthioadenosine and S-adenosyl-L-homocysteine into 5-methylthioinosine and S-inosyl-L-homocysteine, respectively. Is also able to deaminate adenosine. The polypeptide is 5-methylthioadenosine/S-adenosylhomocysteine deaminase 1 (Archaeoglobus fulgidus (strain ATCC 49558 / DSM 4304 / JCM 9628 / NBRC 100126 / VC-16)).